The chain runs to 286 residues: Phosphoribosylaminoimidazole-succinocarboxamide synthase (286 aa).

The protein belongs to the SAICAR synthetase family.

The catalysed reaction is 5-amino-1-(5-phospho-D-ribosyl)imidazole-4-carboxylate + L-aspartate + ATP = (2S)-2-[5-amino-1-(5-phospho-beta-D-ribosyl)imidazole-4-carboxamido]succinate + ADP + phosphate + 2 H(+). It participates in purine metabolism; IMP biosynthesis via de novo pathway; 5-amino-1-(5-phospho-D-ribosyl)imidazole-4-carboxamide from 5-amino-1-(5-phospho-D-ribosyl)imidazole-4-carboxylate: step 1/2. In Histophilus somni (strain 2336) (Haemophilus somnus), this protein is Phosphoribosylaminoimidazole-succinocarboxamide synthase.